Consider the following 78-residue polypeptide: Small ribosomal subunit protein bS18 (78 aa).

Belongs to the bacterial ribosomal protein bS18 family. As to quaternary structure, part of the 30S ribosomal subunit. Forms a tight heterodimer with protein bS6.

Functionally, binds as a heterodimer with protein bS6 to the central domain of the 16S rRNA, where it helps stabilize the platform of the 30S subunit. This is Small ribosomal subunit protein bS18 from Geobacillus sp. (strain WCH70).